The chain runs to 851 residues: Envelope glycoprotein gp160 (851 aa).

The first 32 residues, Met1 to Glu32, serve as a signal peptide directing secretion. Residues Lys33–Leu679 lie on the Extracellular side of the membrane. The cysteines at positions 54 and 74 are disulfide-linked. Asn88, Asn136, Asn141, Asn156, Asn160, Asn186, Asn197, Asn230, Asn234, Asn241, Asn262, Asn276, Asn295, Asn301, Asn332, Asn339, and Asn356 each carry an N-linked (GlcNAc...) asparagine; by host glycan. Cystine bridges form between Cys119–Cys205, Cys126–Cys196, Cys131–Cys157, Cys218–Cys247, and Cys228–Cys239. The segment at Cys131–Asn156 is V1. A V2 region spans residues Cys157–Cys196. The segment at Cys296–His330 is V3. Cys296 and Cys331 are oxidised to a cystine. Residues Ser364–His374 are CD4-binding loop. Disulfide bonds link Cys378–Cys440 and Cys385–Cys413. The V4 stretch occupies residues Cys385 to Cys413. N-linked (GlcNAc...) asparagine; by host glycosylation is found at Asn386, Asn392, Asn401, Asn443, and Asn458. 2 V5 regions span residues Ser456 to Gly466 and Asn458 to Gly466. Residues Ala507–Ala527 form a fusion peptide region. Positions Lys569–Leu587 are immunosuppression. Residues Cys593 and Cys599 are joined by a disulfide bond. N-linked (GlcNAc...) asparagine; by host glycans are attached at residues Asn606, Asn611, Asn620, Asn632, and Asn669. Residues Arg628 to Ala662 are a coiled coil. Residues Glu657 to Lys678 form an MPER; binding to GalCer region. The chain crosses the membrane as a helical span at residues Phe680–Val700. The Cytoplasmic portion of the chain corresponds to Asn701 to Leu851. Residues Tyr707–Leu710 carry the YXXL motif; contains endocytosis signal motif. The segment at Gln713 to Arg735 is disordered. The S-palmitoyl cysteine; by host moiety is linked to residue Cys759. The Di-leucine internalization motif motif lies at Leu850–Leu851.

This sequence belongs to the HIV-1 env protein family. The mature envelope protein (Env) consists of a homotrimer of non-covalently associated gp120-gp41 heterodimers. The resulting complex protrudes from the virus surface as a spike. There seems to be as few as 10 spikes on the average virion. Interacts with host CD4, CCR5 and CXCR4. Gp120 also interacts with the C-type lectins CD209/DC-SIGN and CLEC4M/DC-SIGNR (collectively referred to as DC-SIGN(R)). Gp120 and gp41 interact with GalCer. Gp120 interacts with host ITGA4/ITGB7 complex; on CD4+ T-cells, this interaction results in rapid activation of integrin ITGAL/LFA-1, which facilitates efficient cell-to-cell spreading of HIV-1. Gp120 interacts with cell-associated heparan sulfate; this interaction increases virus infectivity on permissive cells and may be involved in infection of CD4- cells. In terms of assembly, the mature envelope protein (Env) consists of a homotrimer of non-covalently associated gp120-gp41 heterodimers. The resulting complex protrudes from the virus surface as a spike. There seems to be as few as 10 spikes on the average virion. In terms of processing, highly glycosylated by host. The high number of glycan on the protein is reffered to as 'glycan shield' because it contributes to hide protein sequence from adaptive immune system. Palmitoylation of the transmembrane protein and of Env polyprotein (prior to its proteolytic cleavage) is essential for their association with host cell membrane lipid rafts. Palmitoylation is therefore required for envelope trafficking to classical lipid rafts, but not for viral replication. Post-translationally, specific enzymatic cleavages in vivo yield mature proteins. Envelope glycoproteins are synthesized as an inactive precursor that is heavily N-glycosylated and processed likely by host cell furin in the Golgi to yield the mature SU and TM proteins. The cleavage site between SU and TM requires the minimal sequence [KR]-X-[KR]-R. About 2 of the 9 disulfide bonds of gp41 are reduced by P4HB/PDI, following binding to CD4 receptor.

It localises to the virion membrane. It is found in the host cell membrane. The protein localises to the host endosome membrane. In terms of biological role, oligomerizes in the host endoplasmic reticulum into predominantly trimers. In a second time, gp160 transits in the host Golgi, where glycosylation is completed. The precursor is then proteolytically cleaved in the trans-Golgi and thereby activated by cellular furin or furin-like proteases to produce gp120 and gp41. Attaches the virus to the host lymphoid cell by binding to the primary receptor CD4. This interaction induces a structural rearrangement creating a high affinity binding site for a chemokine coreceptor like CXCR4 and/or CCR5. Acts as a ligand for CD209/DC-SIGN and CLEC4M/DC-SIGNR, which are respectively found on dendritic cells (DCs), and on endothelial cells of liver sinusoids and lymph node sinuses. These interactions allow capture of viral particles at mucosal surfaces by these cells and subsequent transmission to permissive cells. HIV subverts the migration properties of dendritic cells to gain access to CD4+ T-cells in lymph nodes. Virus transmission to permissive T-cells occurs either in trans (without DCs infection, through viral capture and transmission), or in cis (following DCs productive infection, through the usual CD4-gp120 interaction), thereby inducing a robust infection. In trans infection, bound virions remain infectious over days and it is proposed that they are not degraded, but protected in non-lysosomal acidic organelles within the DCs close to the cell membrane thus contributing to the viral infectious potential during DCs' migration from the periphery to the lymphoid tissues. On arrival at lymphoid tissues, intact virions recycle back to DCs' cell surface allowing virus transmission to CD4+ T-cells. Functionally, acts as a class I viral fusion protein. Under the current model, the protein has at least 3 conformational states: pre-fusion native state, pre-hairpin intermediate state, and post-fusion hairpin state. During fusion of viral and target intracellular membranes, the coiled coil regions (heptad repeats) assume a trimer-of-hairpins structure, positioning the fusion peptide in close proximity to the C-terminal region of the ectodomain. The formation of this structure appears to drive apposition and subsequent fusion of viral and target cell membranes. Complete fusion occurs in host cell endosomes and is dynamin-dependent, however some lipid transfer might occur at the plasma membrane. The virus undergoes clathrin-dependent internalization long before endosomal fusion, thus minimizing the surface exposure of conserved viral epitopes during fusion and reducing the efficacy of inhibitors targeting these epitopes. Membranes fusion leads to delivery of the nucleocapsid into the cytoplasm. The chain is Envelope glycoprotein gp160 from Homo sapiens (Human).